A 321-amino-acid polypeptide reads, in one-letter code: Peptidase 1 (321 aa).

The signal sequence occupies residues 1 to 18 (MKFVLAIASLLVLSTVYA). Residues 19–98 (RPASIKTFEE…LKTQFDLNAE (80 aa)) constitute a propeptide, activation peptide. Cystine bridges form between C102-C216, C130-C170, and C164-C202. The active site involves C133. Residue N151 is glycosylated (N-linked (GlcNAc...) asparagine). Residues H269 and R288 contribute to the active site.

Belongs to the peptidase C1 family. In terms of assembly, monomer.

It localises to the secreted. The enzyme catalyses Broad endopeptidase specificity.. Its function is as follows. Thiol protease that hydrolyzes proteins, with a preference for Phe or basic residues. In Dermatophagoides farinae (American house dust mite), this protein is Peptidase 1 (DERF1).